Here is a 176-residue protein sequence, read N- to C-terminus: 4-hydroxylaminobenzoate lyase (176 aa).

It belongs to the PnbB family.

It carries out the reaction 4-hydroxylaminobenzoate + H2O + H(+) = 3,4-dihydroxybenzoate + NH4(+). Functionally, lyase involved in the degradation of nitroaromatic compounds. Catalyzes the conversion of 4-hydroxylaminobenzoate to 3,4-dihydroxybenzoate (protocatechuate). Required for the catabolism of 4-nitrotoluene. The chain is 4-hydroxylaminobenzoate lyase from Pseudomonas putida (Arthrobacter siderocapsulatus).